A 294-amino-acid polypeptide reads, in one-letter code: Protoheme IX farnesyltransferase (294 aa).

Helical transmembrane passes span 8–28 (LTKP…FLIA), 35–55 (YSLF…GCVL), 81–101 (IFLN…FLFL), 107–127 (VLTI…YSLW), 133–153 (IYSI…GYCA), 163–183 (LMLL…IAIL), 209–226 (MVVY…FTVM), 230–252 (SYIF…FYGY), and 266–286 (FLLS…DHIL).

It belongs to the UbiA prenyltransferase family. Protoheme IX farnesyltransferase subfamily.

The protein resides in the cell inner membrane. It carries out the reaction heme b + (2E,6E)-farnesyl diphosphate + H2O = Fe(II)-heme o + diphosphate. It functions in the pathway porphyrin-containing compound metabolism; heme O biosynthesis; heme O from protoheme: step 1/1. Functionally, converts heme B (protoheme IX) to heme O by substitution of the vinyl group on carbon 2 of heme B porphyrin ring with a hydroxyethyl farnesyl side group. This Blochmanniella pennsylvanica (strain BPEN) protein is Protoheme IX farnesyltransferase.